Here is a 159-residue protein sequence, read N- to C-terminus: Neurotrophin-3 (159 aa).

An N-terminal signal peptide occupies residues 1–3; the sequence is IQS. A propeptide spanning residues 4–115 is cleaved from the precursor; the sequence is TSMDQGILTE…VQNRTSRRKR (112 aa). The interval 91-129 is disordered; it reads APLEPPPLYLTEEPLVQNRTSRRKREGKRHRGEYSVCDS. N-linked (GlcNAc...) asparagine glycosylation is present at Asn-108. Basic residues predominate over residues 110 to 121; that stretch reads TSRRKREGKRHR.

This sequence belongs to the NGF-beta family.

It is found in the secreted. Functionally, seems to promote the survival of visceral and proprioceptive sensory neurons. The polypeptide is Neurotrophin-3 (NTF3) (Candoia carinata (Papuan tree boa)).